The following is a 260-amino-acid chain: Collagenase (260 aa).

The N-terminal stretch at 1–16 (MKFLLVFALALATTSA) is a signal peptide. The propeptide occupies 17-30 (FQHPASIFELREGR). The Peptidase S1 domain occupies 31–257 (IINGYEAYTG…YMDWIQQNTG (227 aa)). A disulfide bridge links Cys-60 with Cys-76. Catalysis depends on charge relay system residues His-75 and Asp-118. Cystine bridges form between Cys-181–Cys-196 and Cys-206–Cys-234. Ser-210 serves as the catalytic Charge relay system.

The protein belongs to the peptidase S1 family.

It localises to the secreted. The catalysed reaction is Hydrolysis of proteins including native collagen at Xaa-|-Ala bond leaving an N-terminal (75%) and a C-terminal (25%) fragment.. With respect to regulation, inhibited by diisopropylfluorophosphate. Functionally, this enzyme is a serine protease capable of degrading the native triple helix of collagen. Also cleaves the B chain of insulin at the 15-Leu-|-Try-16 and 22-Arg-|-Gly-23 bonds. Hydrolyzes casein, but not Px-Pro-Leu-Gly-Pro-DArg, BzArgNHPh, AcTyrNHPh, 2-naphthyl phosphate, 2-naphthyl butyrate, 2-naphthyl caprylate, 2-naphthyl myristate, L-leucine 2-2-naphthylamide, L-valine 2-naphthylamide, L-cysteine 2-naphthylamide or L-glutarylphenylalanine 2-naphthylamide. The protein is Collagenase of Hypoderma lineatum (Early cattle grub).